A 187-amino-acid chain; its full sequence is GTP cyclohydrolase 1 (187 aa).

Residues Cys-78, His-81, and Cys-149 each coordinate Zn(2+).

Belongs to the GTP cyclohydrolase I family. In terms of assembly, toroid-shaped homodecamer, composed of two pentamers of five dimers.

The enzyme catalyses GTP + H2O = 7,8-dihydroneopterin 3'-triphosphate + formate + H(+). Its pathway is cofactor biosynthesis; 7,8-dihydroneopterin triphosphate biosynthesis; 7,8-dihydroneopterin triphosphate from GTP: step 1/1. The polypeptide is GTP cyclohydrolase 1 (Wolinella succinogenes (strain ATCC 29543 / DSM 1740 / CCUG 13145 / JCM 31913 / LMG 7466 / NCTC 11488 / FDC 602W) (Vibrio succinogenes)).